A 269-amino-acid polypeptide reads, in one-letter code: Cytochrome c oxidase subunit 3 (269 aa).

A run of 7 helical transmembrane segments spans residues P21 to M41, I45 to W65, G90 to F110, V127 to A147, A167 to I187, V204 to A224, and I247 to W267.

It belongs to the cytochrome c oxidase subunit 3 family. As to quaternary structure, component of the cytochrome c oxidase (complex IV, CIV), a multisubunit enzyme composed of a catalytic core of 3 subunits and several supernumerary subunits. The complex exists as a monomer or a dimer and forms supercomplexes (SCs) in the inner mitochondrial membrane with ubiquinol-cytochrome c oxidoreductase (cytochrome b-c1 complex, complex III, CIII).

The protein resides in the mitochondrion inner membrane. It carries out the reaction 4 Fe(II)-[cytochrome c] + O2 + 8 H(+)(in) = 4 Fe(III)-[cytochrome c] + 2 H2O + 4 H(+)(out). In terms of biological role, component of the cytochrome c oxidase, the last enzyme in the mitochondrial electron transport chain which drives oxidative phosphorylation. The respiratory chain contains 3 multisubunit complexes succinate dehydrogenase (complex II, CII), ubiquinol-cytochrome c oxidoreductase (cytochrome b-c1 complex, complex III, CIII) and cytochrome c oxidase (complex IV, CIV), that cooperate to transfer electrons derived from NADH and succinate to molecular oxygen, creating an electrochemical gradient over the inner membrane that drives transmembrane transport and the ATP synthase. Cytochrome c oxidase is the component of the respiratory chain that catalyzes the reduction of oxygen to water. Electrons originating from reduced cytochrome c in the intermembrane space (IMS) are transferred via the dinuclear copper A center (CU(A)) of subunit 2 and heme A of subunit 1 to the active site in subunit 1, a binuclear center (BNC) formed by heme A3 and copper B (CU(B)). The BNC reduces molecular oxygen to 2 water molecules using 4 electrons from cytochrome c in the IMS and 4 protons from the mitochondrial matrix. The chain is Cytochrome c oxidase subunit 3 (COX3) from Wickerhamomyces canadensis (Yeast).